We begin with the raw amino-acid sequence, 258 residues long: MLILISPAKTLDYQSPLTTTRYTLPELLDNSQQLIHEARKLTPPQISTLMRISDKLAGINAARFHDWQPDFTPENARQAILAFKGDVYTGLQAETFSEDDFDFAQQHLRMLSGLYGVLRPLDLMQPYRLEMGIRLENARGKDLYQFWGDIITNKLNEALAAQGDNVVINLASDEYFKSVKPKKLNAEIIKPVFLDEKNGKFKIISFYAKKARGLMSRFIIENRLTKPEQLTGFNSEGYFFDEDSSSNGELVFKRYEQR.

It belongs to the UPF0246 family.

This chain is UPF0246 protein YaaA, found in Escherichia coli (strain 55989 / EAEC).